Here is a 554-residue protein sequence, read N- to C-terminus: Thermosome subunit beta (554 aa).

Positions glycine 532 to aspartate 554 are disordered. Basic and acidic residues predominate over residues serine 540–aspartate 554.

It belongs to the TCP-1 chaperonin family. As to quaternary structure, forms a Heterooligomeric complex of two stacked eight-membered rings.

Functionally, molecular chaperone; binds unfolded polypeptides in vitro, and has a weak ATPase activity. This is Thermosome subunit beta (thsB) from Saccharolobus solfataricus (strain ATCC 35092 / DSM 1617 / JCM 11322 / P2) (Sulfolobus solfataricus).